The following is a 145-amino-acid chain: Secreted RxLR effector protein 43 (145 aa).

The signal sequence occupies residues 1–20 (MKVTMALAALCVALQAPCIG). Residues 31–34 (RHLR) carry the RxLR motif.

The protein belongs to the RxLR effector family.

The protein resides in the secreted. The protein localises to the host nucleus. It localises to the host cytoplasm. Functionally, secreted effector that completely suppresses the host cell death induced by cell death-inducing proteins. This Plasmopara viticola (Downy mildew of grapevine) protein is Secreted RxLR effector protein 43.